A 30-amino-acid chain; its full sequence is Pyrrole-2-carboxylate oxygenase (30 aa).

As to quaternary structure, homotrimer. FAD is required as a cofactor.

It catalyses the reaction pyrrole-2-carboxylate + NADH + O2 + H(+) = 5-hydroxypyrrole-2-carboxylate + NAD(+) + H2O. Monooxygenase that initiates the degradation of pyrrole-2-carboxylate, which allows Arthrobacter sp. strain Py1 to grow on pyrrole-2-carboxylate as sole carbon, nitrogen, and energy source. To a lesser extent, can also use pyrrole, pyrrole-2-aldehyde, and indole-2-carboxylate as substrate. The sequence is that of Pyrrole-2-carboxylate oxygenase from Arthrobacter sp. (strain Py1).